A 635-amino-acid chain; its full sequence is Sulfite reductase [ferredoxin], chloroplastic (635 aa).

A chloroplast-targeting transit peptide spans 1-50 (MSGAIGGAEVHGFRGAAAQLPRSRVLGRPIRVAPPAAARPGGASAGSIRA). 2 disordered regions span residues 31–50 (RVAP…SIRA) and 245–267 (PEVT…PEPI). Residues 245-254 (PEVTKARNDN) are compositionally biased toward basic and acidic residues. Residues Cys494, Cys500, Cys540, and Cys544 each coordinate [4Fe-4S] cluster. Cys544 is a binding site for siroheme.

This sequence belongs to the nitrite and sulfite reductase 4Fe-4S domain family. Monomer. Interacts with ferredoxin. Siroheme is required as a cofactor. [4Fe-4S] cluster serves as cofactor. In terms of processing, phosphorylated; this phosphorylation reduces DNA-binding. As to expression, present in roots and leaves (at protein level). In leaves, sulfite reductase activity is detected in both bundle sheath and mesophyll cell types.

It is found in the plastid. It localises to the chloroplast stroma. The protein resides in the chloroplast nucleoid. Its subcellular location is the plastid stroma. The enzyme catalyses hydrogen sulfide + 6 oxidized [2Fe-2S]-[ferredoxin] + 3 H2O = sulfite + 6 reduced [2Fe-2S]-[ferredoxin] + 7 H(+). Its activity is regulated as follows. Inhibited by the tryptophan-modifying reagent, N-bromosuccinimide (NBS), by the lysine-modifying reagent, N-acetylsuccinimide and by the arginine-modifying reagent, phenylglyoxal. Complex formation with ferredoxin prevents these inhibitions. In terms of biological role, essential protein with sulfite reductase activity required in assimilatory sulfate reduction pathway during both primary and secondary metabolism and thus involved in development and growth. Functionally, DNA-binding protein that binds to both double-stranded and single-stranded DNA without significant sequence specificity to reversibly repress the transcriptional activity of chloroplast nucleoids by promoting DNA compaction and possibly regulate DNA replication. This is Sulfite reductase [ferredoxin], chloroplastic (SIR) from Zea mays (Maize).